A 449-amino-acid polypeptide reads, in one-letter code: Myb family transcription factor PHL6 (449 aa).

Residues 49–72 (PFIRSQSPDSPGQLWPKNSSQSTF) are disordered. An HTH myb-type domain is found at 238-298 (ANQKSRMRWT…HLQKYRLAKY (61 aa)). A DNA-binding region (H-T-H motif) is located at residues 269 to 294 (PKAVKKLMNVEGLTIYHVKSHLQKYR). The interval 301-327 (EKKEEKRTDNSEEKKLALSKSEADEKK) is disordered. The coiled coil stretch occupies residues 334 to 354 (TEALRMQMEVQKQLHEQLEVQ). The LHEQLE signature appears at 347-352 (LHEQLE). A disordered region spans residues 376 to 449 (RKTGRWISSS…NIAESEDPKR (74 aa)). Polar residues predominate over residues 381–410 (WISSSSQTVLSPSDDSIPDSQNMSKTKASS).

The protein belongs to the MYB-CC family.

It localises to the nucleus. The chain is Myb family transcription factor PHL6 from Arabidopsis thaliana (Mouse-ear cress).